We begin with the raw amino-acid sequence, 2032 residues long: Transient receptor potential channel (2032 aa).

The span at 129 to 139 (KKTRKHRRRRS) shows a compositional bias: basic residues. Disordered regions lie at residues 129–162 (KKTRKHRRRRSGSFTGGVYPRKGHRNRSLLGHAI), 197–223 (QSKGGDQVPPTSTTTGGAGGDGNAVPT), 831–860 (KKAMGVFSSRPSRTGSGIASRQSTEGMGGV), 912–945 (ANPMRPPNLGDSRDCGSEFDEELSLTSASDGSQT), and 1120–1211 (AAEH…EAGN). 3 stretches are compositionally biased toward polar residues: residues 839–855 (SRPSRTGSGIASRQSTE), 935–945 (SLTSASDGSQT), and 1120–1129 (AAEHQNDMNY). Positions 1130-1149 (SSSSSSSSSSSSSSSSSDSS) are enriched in low complexity. Polar residues predominate over residues 1171–1185 (TSQGSAQSLNITSLF). Helical transmembrane passes span 1310–1330 (FWSWTISFILFITFFTYTLLV), 1332–1352 (TPPRPTVIEYILIAYVAAFGL), 1374–1394 (VCSFWNCVTILAIIFYIVGFF), 1439–1459 (MIQNMSYIIVMLVVTLLSFGL), and 1535–1555 (LMTFFLLIANILLMSMLIAIF). Disordered stretches follow at residues 1753 to 1779 (GTDPILEEKDHDSGENSNSLPPGRIRR), 1853 to 1909 (HPER…SRDQ), 1935 to 1982 (EEED…EEVD), and 1999 to 2032 (LNEEEQAGAPHSTPVIASPSSSRADLTSQKCSDV). Over residues 1935–1947 (EEEDEEEDDEEDD) the composition is skewed to acidic residues. Basic residues predominate over residues 1951–1962 (RHHIHPRRKSSR). Polar residues predominate over residues 2016–2032 (SPSSSRADLTSQKCSDV).

The protein belongs to the transient receptor (TC 1.A.4) family. LTrpC subfamily. In terms of tissue distribution, gonads.

It localises to the membrane. Its function is as follows. Required for initiation and continuation of postembryonic mitotic cell divisions of gonadal cells Z1 and Z4. Zygotic expression is necessary for hermaphrodite fertility. May be a cation channel. The polypeptide is Transient receptor potential channel (gon-2) (Caenorhabditis elegans).